The sequence spans 206 residues: FMN-dependent NADH:quinone oxidoreductase 1 (206 aa).

FMN-binding positions include serine 10 and 16–18 (SLS).

This sequence belongs to the azoreductase type 1 family. In terms of assembly, homodimer. FMN is required as a cofactor.

It catalyses the reaction 2 a quinone + NADH + H(+) = 2 a 1,4-benzosemiquinone + NAD(+). The catalysed reaction is N,N-dimethyl-1,4-phenylenediamine + anthranilate + 2 NAD(+) = 2-(4-dimethylaminophenyl)diazenylbenzoate + 2 NADH + 2 H(+). Quinone reductase that provides resistance to thiol-specific stress caused by electrophilic quinones. Functionally, also exhibits azoreductase activity. Catalyzes the reductive cleavage of the azo bond in aromatic azo compounds to the corresponding amines. The chain is FMN-dependent NADH:quinone oxidoreductase 1 from Burkholderia lata (strain ATCC 17760 / DSM 23089 / LMG 22485 / NCIMB 9086 / R18194 / 383).